Consider the following 438-residue polypeptide: 3-phosphoshikimate 1-carboxyvinyltransferase (438 aa).

3 residues coordinate 3-phosphoshikimate: K21, S22, and R26. K21 contacts phosphoenolpyruvate. The phosphoenolpyruvate site is built by G93 and R121. 3-phosphoshikimate-binding residues include S166, S167, Q168, S194, D324, and K351. Q168 lines the phosphoenolpyruvate pocket. The active-site Proton acceptor is the D324. Residues R355 and R395 each coordinate phosphoenolpyruvate.

The protein belongs to the EPSP synthase family. In terms of assembly, monomer.

The protein localises to the cytoplasm. It carries out the reaction 3-phosphoshikimate + phosphoenolpyruvate = 5-O-(1-carboxyvinyl)-3-phosphoshikimate + phosphate. It functions in the pathway metabolic intermediate biosynthesis; chorismate biosynthesis. Catalyzes the transfer of the enolpyruvyl moiety of phosphoenolpyruvate (PEP) to the 5-hydroxyl of shikimate-3-phosphate (S3P) to produce enolpyruvyl shikimate-3-phosphate and inorganic phosphate. This chain is 3-phosphoshikimate 1-carboxyvinyltransferase, found in Methanobrevibacter smithii (strain ATCC 35061 / DSM 861 / OCM 144 / PS).